The following is a 158-amino-acid chain: uncharacterized protein (158 aa).

The region spanning 3–130 (YLQRVTNCVL…DGHILDFMMK (128 aa)) is the Nudix hydrolase domain. Positions 34–55 (GKMESGESVRDSVIREYREETG) match the Nudix box motif. Mg(2+) is bound by residues Glu-49 and Glu-53.

This sequence belongs to the Nudix hydrolase family. Requires Mg(2+) as cofactor.

This is an uncharacterized protein from Bacillus subtilis (strain 168).